We begin with the raw amino-acid sequence, 352 residues long: Uroporphyrinogen decarboxylase (352 aa).

Substrate contacts are provided by residues 26–30 (RQAGR), aspartate 76, tyrosine 153, serine 208, and histidine 323.

This sequence belongs to the uroporphyrinogen decarboxylase family. As to quaternary structure, homodimer.

The protein resides in the cytoplasm. It carries out the reaction uroporphyrinogen III + 4 H(+) = coproporphyrinogen III + 4 CO2. Its pathway is porphyrin-containing compound metabolism; protoporphyrin-IX biosynthesis; coproporphyrinogen-III from 5-aminolevulinate: step 4/4. Functionally, catalyzes the decarboxylation of four acetate groups of uroporphyrinogen-III to yield coproporphyrinogen-III. The sequence is that of Uroporphyrinogen decarboxylase from Synechococcus sp. (strain CC9605).